Reading from the N-terminus, the 103-residue chain is Small ribosomal subunit protein bS18c (103 aa).

The protein belongs to the bacterial ribosomal protein bS18 family. In terms of assembly, part of the 30S ribosomal subunit.

The protein localises to the plastid. Its subcellular location is the chloroplast. The protein is Small ribosomal subunit protein bS18c (rps18) of Chlorella vulgaris (Green alga).